The sequence spans 592 residues: Sodium- and chloride-dependent transporter XTRP3 (592 aa).

At 1–5 (MEKAR) the chain is on the cytoplasmic side. A helical transmembrane segment spans residues 6-26 (PLWANSLQFVFACISYAVGLG). Over 27–42 (NVWRFPYLCQMYGGGS) the chain is Extracellular. The helical transmembrane segment at 43–63 (FLVPYIIMLIVEGMPLLYLEL) threads the bilayer. At 64–79 (AVGQRMRQGSIGAWRT) the chain is on the cytoplasmic side. The helical transmembrane segment at 80-100 (ISPYLSGVGVASVVVSFFLSM) threads the bilayer. Topologically, residues 101–165 (YYNVINAWAF…ISPSLQENGG (65 aa)) are extracellular. The N-linked (GlcNAc...) asparagine glycan is linked to Asn-131. Residues 166 to 186 (VQWEPALCLLLAWLVVYLCIL) traverse the membrane as a helical segment. The Cytoplasmic portion of the chain corresponds to 187-194 (RGTESTGK). Residues 195–215 (VVYFTASLPYCVLIIYLIRGL) form a helical membrane-spanning segment. Over 216 to 241 (TLHGATNGLMYMFTPKIEQLANPKAW) the chain is Extracellular. Residues 242–262 (INAATQIFFSLGLGFGSLIAF) form a helical membrane-spanning segment. Residues 263–276 (ASYNEPSNNCQKHA) are Cytoplasmic-facing. The helical transmembrane segment at 277–297 (IIVSLINSFTSIFASIVTFSI) threads the bilayer. Residues 298–389 (YGFKATFNYE…EAIKNMEVSQ (92 aa)) are Extracellular-facing. Residue Asn-357 is glycosylated (N-linked (GlcNAc...) asparagine). The chain crosses the membrane as a helical span at residues 390–410 (LWSVLYFFMLLMLGIGSMLGN). Residues 411–431 (TAAILTPLTDSKIISSHLPKE) are Cytoplasmic-facing. Residues 432 to 452 (AISGLVCLVNCAIGMVFTMEA) form a helical membrane-spanning segment. At 453 to 465 (GNYWFDIFNDYAA) the chain is on the extracellular side. The chain crosses the membrane as a helical span at residues 466–486 (TLSLLLIVLVETIAVCYVYGL). The Cytoplasmic portion of the chain corresponds to 487-504 (RRFESDLKAMTGRAVSWY). The helical transmembrane segment at 505–525 (WKVMWAGVSPLLIVSLFVFYL) threads the bilayer. Residues 526–554 (SDYILTGTLKYQAWDASQGQLVTKDYPAY) lie on the Extracellular side of the membrane. Residues 555–575 (ALAVIGLLVASSTMCIPLAAL) traverse the membrane as a helical segment. Topologically, residues 576 to 592 (GTFVQRRLKRGDADPVA) are cytoplasmic.

This sequence belongs to the sodium:neurotransmitter symporter (SNF) (TC 2.A.22) family. SLC6A20 subfamily. In terms of tissue distribution, kidney and small intestine. Expressed in the S3 segment of the proximal tubule. Expressed in neurons.

It is found in the apical cell membrane. It carries out the reaction L-proline(out) + chloride(out) + 2 Na(+)(out) = L-proline(in) + chloride(in) + 2 Na(+)(in). The enzyme catalyses L-pipecolate(out) + chloride(out) + 2 Na(+)(out) = L-pipecolate(in) + chloride(in) + 2 Na(+)(in). The catalysed reaction is sarcosine(out) + chloride(out) + 2 Na(+)(out) = sarcosine(in) + chloride(in) + 2 Na(+)(in). It catalyses the reaction N-methyl-L-proline(out) + chloride(out) + 2 Na(+)(out) = N-methyl-L-proline(in) + chloride(in) + 2 Na(+)(in). It carries out the reaction 2-methyl-2-(methylamino)propanoate(out) + chloride(out) + 2 Na(+)(out) = 2-methyl-2-(methylamino)propanoate(in) + chloride(in) + 2 Na(+)(in). The enzyme catalyses glycine betaine(out) + chloride(out) + 2 Na(+)(out) = glycine betaine(in) + chloride(in) + 2 Na(+)(in). The catalysed reaction is glycine(out) + chloride(out) + 2 Na(+)(out) = glycine(in) + chloride(in) + 2 Na(+)(in). Functionally, mediates the Na(+)- and Cl(-)-dependent uptake of imino acids such as L-proline, N-methyl-L-proline and pipecolate as well as N-methylated amino acids. Also transports glycine, regulates proline and glycine homeostasis in the brain playing a role in the modulation of NMDAR currents. The sequence is that of Sodium- and chloride-dependent transporter XTRP3 from Homo sapiens (Human).